Consider the following 1366-residue polypeptide: DNA-directed RNA polymerase subunit beta' (1366 aa).

A compositionally biased stretch (basic residues) spans 1–20; that stretch reads MTSSKPKKTSRVRKTTKNSK. A disordered region spans residues 1 to 34; the sequence is MTSSKPKKTSRVRKTTKNSKKNNPLTMPALAKTP. Zn(2+) contacts are provided by C248, C315, C322, and C325. The interval 1291-1366 is disordered; that stretch reads YTVDMPQSPS…LQEEGLLSDE (76 aa). The span at 1295-1305 shows a compositional bias: polar residues; it reads MPQSPSVSSTA. The segment covering 1354 to 1366 has biased composition (low complexity); it reads LEGLQEEGLLSDE.

Belongs to the RNA polymerase beta' chain family. RpoC2 subfamily. In terms of assembly, in cyanobacteria the RNAP catalytic core is composed of 2 alpha, 1 beta, 1 beta', 1 gamma and 1 omega subunit. When a sigma factor is associated with the core the holoenzyme is formed, which can initiate transcription. Zn(2+) is required as a cofactor.

It carries out the reaction RNA(n) + a ribonucleoside 5'-triphosphate = RNA(n+1) + diphosphate. DNA-dependent RNA polymerase catalyzes the transcription of DNA into RNA using the four ribonucleoside triphosphates as substrates. This is DNA-directed RNA polymerase subunit beta' from Prochlorococcus marinus (strain MIT 9301).